A 304-amino-acid polypeptide reads, in one-letter code: D-tagatose-1-phosphate kinase (304 aa).

Asp250 functions as the Proton acceptor in the catalytic mechanism.

Belongs to the carbohydrate kinase PfkB family. Mg(2+) serves as cofactor.

The catalysed reaction is alpha-D-tagatopyranose 1-phosphate + ATP = D-tagatofuranose 1,6-bisphosphate + ADP + H(+). Its pathway is carbohydrate degradation. Kinase involved in a D-tagatose catabolic pathway. Catalyzes the phosphorylation of D-tagatose-1-phosphate (Tag-1P) to D-tagatose-1,6-bisphosphate. This chain is D-tagatose-1-phosphate kinase, found in Klebsiella oxytoca.